We begin with the raw amino-acid sequence, 1074 residues long: Collagen, type I, alpha 1a (1074 aa).

Over residues 1 to 13 the composition is skewed to pro residues; sequence KSPAMPVPGPMGP. A disordered region spans residues 1–1010; that stretch reads KSPAMPVPGP…PQEKAPDPYR (1010 aa). Residues 14–36 show a composition bias toward low complexity; sequence MGPRSGPQGFPGEAGAAGAMGPR. Residues 45-59 show a composition bias toward basic and acidic residues; sequence NGEDGESGKPGRGGE. Low complexity predominate over residues 129 to 147; it reads TGAAGAAGARGNDGAAGAA. The segment covering 149 to 162 has biased composition (pro residues); that stretch reads PPGPTGPAGPPGFP. Gly residues predominate over residues 163-181; sequence GGPGAKGDAGAQGGRGPEG. Low complexity-rich tracts occupy residues 182-225, 234-272, and 290-299; these read PAGA…AGAP, SGPQGAAGAPGPKGNTGEVGAPGAKGEAGAKGEAGAPGV, and EPGAAGARGA. Gly residues predominate over residues 301 to 313; the sequence is GERGGPGGRGFPG. Composition is skewed to low complexity over residues 377-392, 469-530, and 563-578; these read VGARGQPGVMGFPGPK, VPGE…QGMP, and RGLTGPLGLPGPAGAT. The span at 588 to 597 shows a compositional bias: gly residues; sequence GPVGPGGARG. Low complexity-rich tracts occupy residues 611–647 and 661–683; these read AGFAGPPGADGQPGAKGEAGDNGAKGDAGPPGAAGPT and PKGARGAAGPPGATGFPGAAGRV. A compositionally biased stretch (pro residues) spans 685 to 697; it reads PPGPSGNPGPPGP. Composition is skewed to low complexity over residues 715–742 and 803–823; these read PAGRPGELGAAGPPGPAGEKGSPGSEGA and PGLAGAPGEPGREGSPGSEGS. A compositionally biased stretch (pro residues) spans 847–857; sequence APGPPGAPGPV. The segment covering 871 to 890 has biased composition (low complexity); that stretch reads PAGPAGSAGPAGPRGPAGAP. Basic and acidic residues predominate over residues 893–907; that stretch reads RGDKGESGEAGERGH. Residues 920–956 are compositionally biased toward low complexity; that stretch reads SGSSGEQGPAGAAGPAGPRGPAGSAGSPGKDGMSGLP. A compositionally biased stretch (pro residues) spans 974–986; sequence AGPPGPPGPPGAP. The Fibrillar collagen NC1 domain maps to 1014–1074; sequence LEVDSTLKSL…GLEVGPVCFL (61 aa).

It belongs to the fibrillar collagen family.

It is found in the secreted. It localises to the extracellular space. The protein resides in the extracellular matrix. This is Collagen, type I, alpha 1a from Epinephelus marginatus (Dusky grouper).